The following is a 580-amino-acid chain: MNHLIAFWPILKRLLIYVKPHKKKLILAFIFLLSGSTSEVLGPILISYFINNILSKHQLHLLIILTIITLFIILQILSVFLNYFQSILFNKIAVESINKLRQDVMYAALQQPISEFDSQPIGQMISKVTNDTEAVKELYDTVGPTLFRSIILIFIILFAMFTLEWHMALVALFILPLVITIMLVYQYYSTPLLRKVRYYLAEINNKFNETINGMNVIQQFCQQRRFQEKIKKSSDLHYMSRMKILRLDGFLLRPLLSLLSSMILCNFMFLFSFFPVGAFEVGVLYAFITYLGRLNEPLIAITIQQSVLQQSIVAGERIFSLIDSPKQKYGKNKDLLKSGKINIQNVSFYHKNCNKNILENINIKISSKSFVAFVGHTGSGKSTLANLIMGYYPLKNGKIYLDDKSIDSISHSVLRRNVLMVQQDPIVLSDTFFYNITLGRKIPEEKVWNILDTVHLSDLVKSMPKGIYSLLGEEGNNLSVGQKQLLAIARVLVAYPKVLILDEATANIDSGTEQLIQKTLLSIRKNCTLIIIAHRLSTIIEADSIIVLKKGKIVEFGTHEQLLTKKSCYYKMYKFQSCKF.

The ABC transmembrane type-1 domain occupies 25–310 (LILAFIFLLS…ITIQQSVLQQ (286 aa)). Helical transmembrane passes span 26 to 46 (ILAF…PILI), 61 to 81 (LLII…SVFL), 150 to 170 (IILI…MALV), 173 to 193 (FILP…TPLL), 247 to 267 (LDGF…LCNF), and 268 to 288 (MFLF…YAFI). Residues 341 to 575 (INIQNVSFYH…KSCYYKMYKF (235 aa)) enclose the ABC transporter domain. ATP is bound at residue 375–382 (GHTGSGKS).

The protein belongs to the ABC transporter superfamily. Drug exporter-2 (TC 3.A.1.117) family.

The protein resides in the cell membrane. The catalysed reaction is ATP + H2O + xenobioticSide 1 = ADP + phosphate + xenobioticSide 2.. This Buchnera aphidicola subsp. Acyrthosiphon pisum (strain APS) (Acyrthosiphon pisum symbiotic bacterium) protein is Multidrug resistance-like ATP-binding protein MdlB (mdlB).